The following is a 119-amino-acid chain: Holo-[acyl-carrier-protein] synthase (119 aa).

Residues aspartate 8 and glutamate 50 each coordinate Mg(2+).

The protein belongs to the P-Pant transferase superfamily. AcpS family. The cofactor is Mg(2+).

The protein localises to the cytoplasm. The catalysed reaction is apo-[ACP] + CoA = holo-[ACP] + adenosine 3',5'-bisphosphate + H(+). In terms of biological role, transfers the 4'-phosphopantetheine moiety from coenzyme A to a Ser of acyl-carrier-protein. This Clavibacter sepedonicus (Clavibacter michiganensis subsp. sepedonicus) protein is Holo-[acyl-carrier-protein] synthase.